We begin with the raw amino-acid sequence, 399 residues long: tRNA-specific 2-thiouridylase MnmA (399 aa).

Residues 21 to 28 (AMSGGVDS) and Leu47 contribute to the ATP site. Catalysis depends on Cys115, which acts as the Nucleophile. The cysteines at positions 115 and 211 are disulfide-linked. Position 139 (Gly139) interacts with ATP. The interaction with tRNA stretch occupies residues 161 to 163 (RDQ). The active-site Cysteine persulfide intermediate is the Cys211.

Belongs to the MnmA/TRMU family.

It is found in the cytoplasm. The enzyme catalyses S-sulfanyl-L-cysteinyl-[protein] + uridine(34) in tRNA + AH2 + ATP = 2-thiouridine(34) in tRNA + L-cysteinyl-[protein] + A + AMP + diphosphate + H(+). Its function is as follows. Catalyzes the 2-thiolation of uridine at the wobble position (U34) of tRNA, leading to the formation of s(2)U34. This is tRNA-specific 2-thiouridylase MnmA from Parvibaculum lavamentivorans (strain DS-1 / DSM 13023 / NCIMB 13966).